The chain runs to 124 residues: Small ribosomal subunit protein uS12c (124 aa).

The segment at 105 to 124 (AGVKDRRQSRSKYGAKRPKA) is disordered. A compositionally biased stretch (basic residues) spans 113 to 124 (SRSKYGAKRPKA).

The protein belongs to the universal ribosomal protein uS12 family. As to quaternary structure, part of the 30S ribosomal subunit.

It localises to the plastid. Its subcellular location is the cyanelle. In terms of biological role, with S4 and S5 plays an important role in translational accuracy. Located at the interface of the 30S and 50S subunits. This chain is Small ribosomal subunit protein uS12c (rps12), found in Cyanophora paradoxa.